We begin with the raw amino-acid sequence, 246 residues long: MATSRTFIFSNLFIFFLVIATTYGQAPAPGPSGPTNITAILEKAGQFTLFIRLLKSTQASDQINTQLNSSSSNGLTVFAPTDNAFNSLKSGTLNSLSDQQKVQLVQFHVLPTLITMPQFQTVSNPLRTQAGDGQNGKFPLNITSSGNQVNITTGVVSATVANSVYSDKQLAVYQVDQVLLPLAMFGSSVAPAPAPEKGGSVSKGSASGGDDGGDSTDSSDAERTGFGFGIRITTVAAIAASSSLWI.

The first 24 residues, 1–24 (MATSRTFIFSNLFIFFLVIATTYG), serve as a signal peptide directing secretion. The FAS1 domain occupies 34-179 (PTNITAILEK…LAVYQVDQVL (146 aa)). N-linked (GlcNAc...) asparagine glycans are attached at residues asparagine 36, asparagine 68, asparagine 141, and asparagine 150. Residues 193 to 222 (PAPEKGGSVSKGSASGGDDGGDSTDSSDAE) form a disordered region. Serine 219 carries GPI-anchor amidated serine lipidation. Residues 220–246 (DAERTGFGFGIRITTVAAIAASSSLWI) constitute a propeptide, removed in mature form.

The protein belongs to the fasciclin-like AGP family. In terms of tissue distribution, expressed in the sclerenchyma cells of inflorescence stems and siliques.

The protein localises to the cell membrane. Functionally, may be a cell surface adhesion protein. The polypeptide is Fasciclin-like arabinogalactan protein 11 (FLA11) (Arabidopsis thaliana (Mouse-ear cress)).